We begin with the raw amino-acid sequence, 1488 residues long: Indigoidine synthase (1488 aa).

The segment at 229 to 585 is adenylation; sequence KNRAQRHPEQ…GGDGVARGYL (357 aa). Residues 1137-1212 enclose the Carrier domain; that stretch reads APRNPLEHQV…KLAAWLSRAR (76 aa). The residue at position 1172 (serine 1172) is an O-(pantetheine 4'-phosphoryl)serine. The interval 1230–1346 is thioesterase; sequence PIYCWPGLGG…ERVAAMNRKA (117 aa).

It belongs to the ATP-dependent AMP-binding enzyme family. Pantetheine 4'-phosphate is required as a cofactor.

The catalysed reaction is 2 FMN + 2 L-glutamine + 2 ATP + O2 = indigoidine + 2 FMNH2 + 2 AMP + 2 diphosphate + 2 H2O. The enzyme catalyses FMN + L-glutamine + ATP = 3-amino-1,5-dihydropyridine-2,6-dione + FMNH2 + AMP + diphosphate. It catalyses the reaction 2 3-amino-1,5-dihydropyridine-2,6-dione + O2 = indigoidine + 2 H2O. It functions in the pathway pigment biosynthesis. Its function is as follows. Nonribosomal peptide synthetase involved in the biosynthesis of the blue pigment indigoidine, which is implicated in pathogenicity and protection from oxidative stress. Catalyzes the synthesis of the blue pigment using L-Gln as a substrate. Two glutamine molecules are cyclized and oxidized to form indigoidine. The protein is Indigoidine synthase of Dickeya dadantii (strain 3937) (Erwinia chrysanthemi (strain 3937)).